We begin with the raw amino-acid sequence, 676 residues long: Transketolase 7 (676 aa).

Position 36 (H36) interacts with substrate. Thiamine diphosphate-binding positions include H76 and 125 to 127; that span reads GPL. D166 provides a ligand contact to Mg(2+). The thiamine diphosphate site is built by G167 and N196. N196 and I198 together coordinate Mg(2+). Positions 273, 367, and 394 each coordinate substrate. H273 contributes to the thiamine diphosphate binding site. The thiamine diphosphate site is built by E421 and F448. E421 acts as the Proton donor in catalysis. Substrate-binding residues include H472, D480, and R531.

This sequence belongs to the transketolase family. As to quaternary structure, homodimer. Mg(2+) is required as a cofactor. The cofactor is Ca(2+). Requires Mn(2+) as cofactor. It depends on Co(2+) as a cofactor. Thiamine diphosphate serves as cofactor. In terms of tissue distribution, leaves and roots.

It carries out the reaction D-sedoheptulose 7-phosphate + D-glyceraldehyde 3-phosphate = aldehydo-D-ribose 5-phosphate + D-xylulose 5-phosphate. Could be involved in the conversion of sugars, which are a major phenomenon in the rehydration process. Its function is as follows. Catalyzes the transfer of a two-carbon ketol group from a ketose donor to an aldose acceptor, via a covalent intermediate with the cofactor thiamine pyrophosphate. The chain is Transketolase 7 (TKT7) from Craterostigma plantagineum (Blue gem).